Consider the following 37-residue polypeptide: Potassium channel toxin alpha-KTx 15.3 (37 aa).

Glutamine 1 carries the post-translational modification Pyrrolidone carboxylic acid. Intrachain disulfides connect cysteine 8/cysteine 28, cysteine 13/cysteine 33, and cysteine 17/cysteine 35.

As to expression, expressed by the venom gland.

The protein localises to the secreted. Functionally, inhibits A-type (Kv4) voltage-gated potassium channels of striated neurons (Ki=131 nM), probably by acting as a pore blocker. Has also been shown to block ERG1/Kv11.1/KCNH2 potassium channels (IC(50)=7.9 uM). The presence of the Kv4-associated proteins DPP6 or DPP10 is mandatory to have high-affinity blockade of Kv4.2/KCND2 and Kv4.3/KCND3 channels (80-90% inhibition at 500 nM of toxin). In contrast, the presence of the Kv4-associated protein KChIP1/KCNIP1 does not enhance the affinity blockade (only 40% inhibition at 500 nM). In adult rat brain, the toxin binds to sites in the striatum, and cerebellum. It shares the same target in rat brain than AaTX1 (AC Q867F4) and BmTX3 (AC Q8I0L5). In DPP6 knockout mice, A-type currents are about 20-fold less affected by the toxin. In rodent models of Parkinson's disease, the toxin reduces motor symptoms and emotional and cognitive symptoms. The chain is Potassium channel toxin alpha-KTx 15.3 from Androctonus mauritanicus mauritanicus (Scorpion).